A 714-amino-acid polypeptide reads, in one-letter code: Probable serine/threonine-protein kinase mkcB (714 aa).

A compositionally biased stretch (basic residues) spans 1–12 (MKSILKKAKHFF). Disordered stretches follow at residues 1-267 (MKSI…SSTS) and 281-349 (GSGS…EQKP). A compositionally biased stretch (basic and acidic residues) spans 23-35 (GGEKTAKESESQQ). Residues 62–83 (SQSQPTTSALQTSTSLQPSSSL) show a composition bias toward low complexity. Residues 84–94 (HQIPQSQSSLE) show a composition bias toward polar residues. Composition is skewed to low complexity over residues 95-111 (LTTN…TKQL) and 120-166 (PHSQ…TLTT). Positions 167-177 (PVPSSENLATL) are enriched in polar residues. Low complexity-rich tracts occupy residues 178–241 (STST…QEQT) and 254–267 (LSQS…SSTS). A compositionally biased stretch (polar residues) spans 282–294 (SGSTKNKDSSSAP). Low complexity-rich tracts occupy residues 300-314 (NNNN…KNRS) and 324-337 (NNNN…KNNN). The Protein kinase domain maps to 438–687 (YKDSDQVGKG…AEELLKHPFI (250 aa)). ATP contacts are provided by residues 444–452 (VGKGGFGTV) and K467. Residue D558 is the Proton acceptor of the active site.

It belongs to the protein kinase superfamily. STE Ser/Thr protein kinase family. STE20 subfamily. Mg(2+) is required as a cofactor. As to expression, expressed at equal levels in prestalk and prespore cells.

The enzyme catalyses L-seryl-[protein] + ATP = O-phospho-L-seryl-[protein] + ADP + H(+). It catalyses the reaction L-threonyl-[protein] + ATP = O-phospho-L-threonyl-[protein] + ADP + H(+). The chain is Probable serine/threonine-protein kinase mkcB from Dictyostelium discoideum (Social amoeba).